Reading from the N-terminus, the 453-residue chain is Phosphoglucosamine mutase (453 aa).

S108 acts as the Phosphoserine intermediate in catalysis. Mg(2+) is bound by residues S108, D247, D249, and D251. A Phosphoserine modification is found at S108.

The protein belongs to the phosphohexose mutase family. Requires Mg(2+) as cofactor. In terms of processing, activated by phosphorylation.

It catalyses the reaction alpha-D-glucosamine 1-phosphate = D-glucosamine 6-phosphate. Its function is as follows. Catalyzes the conversion of glucosamine-6-phosphate to glucosamine-1-phosphate. The protein is Phosphoglucosamine mutase of Methylobacillus flagellatus (strain ATCC 51484 / DSM 6875 / VKM B-1610 / KT).